The following is a 156-amino-acid chain: Ribonuclease 7 (156 aa).

A signal peptide spans 1 to 28; the sequence is MAPARAGFCPLLLLLLLGLWVAEIPVSA. An important for antibacterial activity region spans residues 29-32; sequence KPKG. Residue histidine 43 is the Proton acceptor of the active site. DUMP contacts are provided by histidine 43, lysine 66, asparagine 69, and threonine 70. 4 cysteine pairs are disulfide-bonded: cysteine 51–cysteine 109, cysteine 65–cysteine 119, cysteine 83–cysteine 134, and cysteine 90–cysteine 97. Residue asparagine 127 is glycosylated (N-linked (GlcNAc...) asparagine). Residues 139–140 form an important for antibacterial activity region; that stretch reads KK. Residues histidine 151 and arginine 154 each contribute to the dUMP site. Histidine 151 (proton donor) is an active-site residue.

Expressed in collecting ducts in kidney, and in apical uroepithelium in bladder (at protein level). Expressed in various epithelial tissues including skin, respiratory tract, genito-urinary tract and, at a low level, in the gut. Expressed in liver, kidney, skeletal muscle and heart.

Its subcellular location is the secreted. Its function is as follows. Exhibits a potent RNase activity. Has broad-spectrum antimicrobial activity against many pathogenic microorganisms including uropathogenic E.coli (UPEC), and remarkably potent activity (lethal dose of 90% &lt; 30 nM) against a vancomycin resistant Enterococcus faecium. Causes loss of bacterial membrane integrity. Probably contributes to urinary tract sterility. Bactericidal activity is independent of RNase activity. The chain is Ribonuclease 7 (RNASE7) from Homo sapiens (Human).